The sequence spans 1173 residues: TBC1 domain family member 5 homolog A (1173 aa).

Disordered regions lie at residues K22–E203, N217–N324, D425–S446, and I823–G872. Composition is skewed to low complexity over residues S26–N107, N127–E203, and N217–Y290. The stretch at N163–Y214 forms a coiled coil. Positions Q299–D313 are enriched in basic and acidic residues. The segment covering S314–N324 has biased composition (polar residues). The region spanning P374 to S729 is the Rab-GAP TBC domain. Over residues Q431–Q441 the composition is skewed to low complexity. Residues T885–V930 are a coiled coil. A compositionally biased stretch (polar residues) spans N983–V994. Disordered regions lie at residues N983–S1015 and Q1054–N1089. Composition is skewed to low complexity over residues Q995–S1015 and Q1054–Q1078. Residues N1079 to N1089 are compositionally biased toward polar residues.

In terms of biological role, may act as a GTPase-activating protein for Rab family protein(s). The sequence is that of TBC1 domain family member 5 homolog A (tbc1d5A) from Dictyostelium discoideum (Social amoeba).